A 154-amino-acid polypeptide reads, in one-letter code: Large ribosomal subunit protein uL23y (154 aa).

This sequence belongs to the universal ribosomal protein uL23 family.

Functionally, binds to a specific region on the 26S rRNA. The protein is Large ribosomal subunit protein uL23y (RPL23AB) of Arabidopsis thaliana (Mouse-ear cress).